The sequence spans 158 residues: Deoxyuridine 5'-triphosphate nucleotidohydrolase (158 aa).

Substrate-binding positions include 75–77, Asn-88, 92–94, and Lys-102; these read RSG and TVD.

This sequence belongs to the dUTPase family. It depends on Mg(2+) as a cofactor.

The catalysed reaction is dUTP + H2O = dUMP + diphosphate + H(+). It functions in the pathway pyrimidine metabolism; dUMP biosynthesis; dUMP from dCTP (dUTP route): step 2/2. Its function is as follows. This enzyme is involved in nucleotide metabolism: it produces dUMP, the immediate precursor of thymidine nucleotides and it decreases the intracellular concentration of dUTP so that uracil cannot be incorporated into DNA. The sequence is that of Deoxyuridine 5'-triphosphate nucleotidohydrolase from Bifidobacterium longum subsp. infantis (strain ATCC 15697 / DSM 20088 / JCM 1222 / NCTC 11817 / S12).